A 352-amino-acid chain; its full sequence is B1 bradykinin receptor (352 aa).

Residues 1-41 lie on the Extracellular side of the membrane; the sequence is MASWPPLELQSSNQSQLFPQNATACDNAPEAWDLLHRVLPT. N-linked (GlcNAc...) asparagine glycans are attached at residues N13 and N21. A helical transmembrane segment spans residues 42 to 62; sequence FIISICSFGLLGNLFVLLVFL. The Cytoplasmic segment spans residues 63–72; that stretch reads LPRRRLNVAE. Residues 73–93 form a helical membrane-spanning segment; that stretch reads IYLANLAASDLVFVLGLPFWA. Residues 94–110 lie on the Extracellular side of the membrane; that stretch reads ENIWNQFNWPFGALLCR. Cysteines 109 and 188 form a disulfide. A helical transmembrane segment spans residues 111–131; sequence VINGIIKANLFISIFLVVAIS. The Cytoplasmic segment spans residues 132–153; that stretch reads QDRYCVLVHPMASRRRQRRRQA. The chain crosses the membrane as a helical span at residues 154-174; that stretch reads RVTCVLIWVVGGLLSIPTFLL. The Extracellular portion of the chain corresponds to 175-206; that stretch reads RSIQAVPDLNITACILLLPHEAWHFARIVELN. Residue N184 is glycosylated (N-linked (GlcNAc...) asparagine). The helical transmembrane segment at 207-227 threads the bilayer; sequence ILAFLLPLAAIIFFNYHILAS. Over 228-250 the chain is Cytoplasmic; the sequence is LRGREEVSRTRCGGSKDSKTTAL. Residues 251–271 traverse the membrane as a helical segment; the sequence is ILTLVVAFLVCWAPYHFFAFL. At 272–294 the chain is on the extracellular side; it reads EFLFQVQAVRGCFWEDFIDLGLQ. A helical membrane pass occupies residues 295–315; it reads LANFLAFTNSSLNPVIYVFVG. Residues 316–352 lie on the Cytoplasmic side of the membrane; it reads RLFRTKVWELYKQCTPKSLAPISSSHRKEIFQLFWRN. A lipid anchor (S-palmitoyl cysteine) is attached at C329.

This sequence belongs to the G-protein coupled receptor 1 family. Bradykinin receptor subfamily. BDKRB1 sub-subfamily.

It localises to the cell membrane. This is a receptor for bradykinin. Could be a factor in chronic pain and inflammation. This chain is B1 bradykinin receptor (BDKRB1), found in Macaca mulatta (Rhesus macaque).